Reading from the N-terminus, the 118-residue chain is MIPQIQRNVIRQRVHTRIRERIQGTTERPRLNVYRSLNHIYAQIIDDTQGRTLVSASTIADKIKTGGNVAAAKEIGKLVAQRAVDKGIKKVVYDRGGYLYHGRIKALADAAREAGLEF.

It belongs to the universal ribosomal protein uL18 family. As to quaternary structure, part of the 50S ribosomal subunit; part of the 5S rRNA/L5/L18/L25 subcomplex. Contacts the 5S and 23S rRNAs.

Functionally, this is one of the proteins that bind and probably mediate the attachment of the 5S RNA into the large ribosomal subunit, where it forms part of the central protuberance. In Acidobacterium capsulatum (strain ATCC 51196 / DSM 11244 / BCRC 80197 / JCM 7670 / NBRC 15755 / NCIMB 13165 / 161), this protein is Large ribosomal subunit protein uL18.